The following is a 472-amino-acid chain: WAS protein family homolog DDB_G0292878 (472 aa).

Positions 279-472 (LPTYDNSNSG…ESDTDSSEWE (194 aa)) are disordered. Polar residues predominate over residues 282–299 (YDNSNSGSAPVNQSSGGD). Residues 300 to 314 (NNVNNNNNNNNSNNS) are compositionally biased toward low complexity. The span at 320–356 (PPQPTNAPPPPPPPPQSANAPPPPPPPPVSAPPPFNP) shows a compositional bias: pro residues. Positions 363–373 (NDDDDDDDDDN) are enriched in acidic residues. The segment covering 374-383 (GGGGGPGGAI) has biased composition (gly residues). A WH2 domain is found at 382-401 (AIGDLLADIRRGHKNRLKKA). Residues 457–472 (TDDQDGESDTDSSEWE) are compositionally biased toward acidic residues.

Belongs to the WASH1 family.

In terms of biological role, acts as a nucleation-promoting factor by activating the Arp2/3 complex to induce actin polymerization. This is WAS protein family homolog DDB_G0292878 from Dictyostelium discoideum (Social amoeba).